Reading from the N-terminus, the 116-residue chain is DNA polymerase epsilon subunit 4 (116 aa).

A compositionally biased stretch (low complexity) spans 1–10; the sequence is MAAAAPGSGA. A disordered region spans residues 1–36; the sequence is MAAAAPGSGAAREEEGTGGDAATPQPPAPTSAPGAR.

Component of the DNA polymerase epsilon complex consisting of four subunits: the catalytic subunit POLE and the accessory subunits POLE2, POLE3 and POLE4. Interaction with POLE3 is a prerequisite for further binding with POLE and POLE2.

The protein localises to the nucleus. In terms of biological role, accessory component of the DNA polymerase epsilon complex. Participates in DNA repair and in chromosomal DNA replication. This chain is DNA polymerase epsilon subunit 4 (POLE4), found in Bos taurus (Bovine).